The chain runs to 163 residues: Nucleotide-binding protein Spro_1084 (163 aa).

This sequence belongs to the YajQ family.

Nucleotide-binding protein. This chain is Nucleotide-binding protein Spro_1084, found in Serratia proteamaculans (strain 568).